The following is a 125-amino-acid chain: Histone H2A (125 aa).

Positions 1-18 (MSGRGKGGKAKGKSKSRS) are enriched in basic residues. The segment at 1–23 (MSGRGKGGKAKGKSKSRSSRAGL) is disordered. The residue at position 2 (Ser-2) is an N-acetylserine. The residue at position 2 (Ser-2) is a Phosphoserine. Position 104 is an N5-methylglutamine (Gln-104).

Belongs to the histone H2A family. The nucleosome is a histone octamer containing two molecules each of H2A, H2B, H3 and H4 assembled in one H3-H4 heterotetramer and two H2A-H2B heterodimers. The octamer wraps approximately 147 bp of DNA.

Its subcellular location is the nucleus. It localises to the chromosome. Functionally, core component of nucleosome. Nucleosomes wrap and compact DNA into chromatin, limiting DNA accessibility to the cellular machineries which require DNA as a template. Histones thereby play a central role in transcription regulation, DNA repair, DNA replication and chromosomal stability. DNA accessibility is regulated via a complex set of post-translational modifications of histones, also called histone code, and nucleosome remodeling. The protein is Histone H2A of Urechis caupo (Innkeeper worm).